The sequence spans 356 residues: UDP-N-acetylglucosamine--N-acetylmuramyl-(pentapeptide) pyrophosphoryl-undecaprenol N-acetylglucosamine transferase (356 aa).

UDP-N-acetyl-alpha-D-glucosamine is bound by residues 11-13, Asn122, Ser186, and Gln287; that span reads TGG.

This sequence belongs to the glycosyltransferase 28 family. MurG subfamily.

The protein resides in the cell inner membrane. The enzyme catalyses di-trans,octa-cis-undecaprenyl diphospho-N-acetyl-alpha-D-muramoyl-L-alanyl-D-glutamyl-meso-2,6-diaminopimeloyl-D-alanyl-D-alanine + UDP-N-acetyl-alpha-D-glucosamine = di-trans,octa-cis-undecaprenyl diphospho-[N-acetyl-alpha-D-glucosaminyl-(1-&gt;4)]-N-acetyl-alpha-D-muramoyl-L-alanyl-D-glutamyl-meso-2,6-diaminopimeloyl-D-alanyl-D-alanine + UDP + H(+). It functions in the pathway cell wall biogenesis; peptidoglycan biosynthesis. Cell wall formation. Catalyzes the transfer of a GlcNAc subunit on undecaprenyl-pyrophosphoryl-MurNAc-pentapeptide (lipid intermediate I) to form undecaprenyl-pyrophosphoryl-MurNAc-(pentapeptide)GlcNAc (lipid intermediate II). In Anaplasma marginale (strain St. Maries), this protein is UDP-N-acetylglucosamine--N-acetylmuramyl-(pentapeptide) pyrophosphoryl-undecaprenol N-acetylglucosamine transferase.